A 363-amino-acid polypeptide reads, in one-letter code: Pyrimidine monooxygenase RutA (363 aa).

FMN-binding positions include 49-50 (IK), asparagine 115, glutamate 124, 140-141 (RY), and serine 190.

Belongs to the NtaA/SnaA/DszA monooxygenase family. RutA subfamily.

It catalyses the reaction uracil + FMNH2 + NADH + O2 = (Z)-3-ureidoacrylate + FMN + NAD(+) + H2O + H(+). The enzyme catalyses thymine + FMNH2 + NADH + O2 = (Z)-2-methylureidoacrylate + FMN + NAD(+) + H2O + H(+). In terms of biological role, catalyzes the pyrimidine ring opening between N-3 and C-4 by an unusual flavin hydroperoxide-catalyzed mechanism, adding oxygen atoms in the process to yield ureidoacrylate peracid, that immediately reacts with FMN forming ureidoacrylate and FMN-N(5)-oxide. The FMN-N(5)-oxide reacts spontaneously with NADH to produce FMN. Requires the flavin reductase RutF to regenerate FMN in vivo. The sequence is that of Pyrimidine monooxygenase RutA from Rhizobium rhizogenes (strain K84 / ATCC BAA-868) (Agrobacterium radiobacter).